The sequence spans 212 residues: ER lumen protein-retaining receptor 1 (212 aa).

The Lumenal segment spans residues 1-4 (MNLF). A helical transmembrane segment spans residues 5 to 24 (RFLGDLSHLLAIILLLLKIW). The Cytoplasmic portion of the chain corresponds to 25–32 (KSRSCAGI). A helical transmembrane segment spans residues 33-52 (SGKSQVLFAVVFTARYLDLF). Residues 47–48 (RY) form an interaction with the K-D-E-L motif on target proteins region. Residues 53-58 (TNYISL) are Lumenal-facing. A helical membrane pass occupies residues 59-79 (YNTCMKVVYIACSFTTVWMIY). Residues 80-92 (SKFKATYDGNHDT) are Cytoplasmic-facing. The helical transmembrane segment at 93–110 (FRVEFLVIPTAILAFLVN) threads the bilayer. Residues 111 to 116 (HDFTPL) are Lumenal-facing. A helical membrane pass occupies residues 117-135 (EILWTFSIYLESVAILPQL). Topologically, residues 136–149 (FMVSKTGEAETITS) are cytoplasmic. Residues 150–168 (HYLFALGVYRTLYLFNWIW) form a helical membrane-spanning segment. Positions 159 to 169 (RTLYLFNWIWR) are interaction with the K-D-E-L motif on target proteins. Residues 169–178 (RYHFEGFFDL) are Lumenal-facing. A helical membrane pass occupies residues 179-199 (IAIVAGLVQTVLYCDFFYLYI). At 200 to 212 (TKVLKGKKLSLPA) the chain is on the cytoplasmic side. Positions 204 to 207 (KGKK) are important for recycling of cargo proteins with the sequence motif K-D-E-L from the Golgi to the endoplasmic reticulum. Phosphoserine; by PKA is present on Ser209.

It belongs to the ERD2 family. Upon ligand binding the receptor oligomerizes and interacts with components of the transport machinery such as ARFGAP1 and ARF1. Post-translationally, phosphorylation by PKA at Ser-209 is required for endoplasmic reticulum retention function.

Its subcellular location is the golgi apparatus membrane. The protein resides in the cytoplasmic vesicle. It localises to the COPI-coated vesicle membrane. It is found in the endoplasmic reticulum membrane. The protein localises to the endoplasmic reticulum-Golgi intermediate compartment membrane. Its function is as follows. Receptor for the C-terminal sequence motif K-D-E-L that is present on endoplasmic reticulum resident proteins and that mediates their recycling from the Golgi back to the endoplasmic reticulum. This Bos taurus (Bovine) protein is ER lumen protein-retaining receptor 1 (KDELR1).